A 273-amino-acid chain; its full sequence is Medium-wave-sensitive opsin 1 (273 aa).

At alanine 1–valine 5 the chain is on the extracellular side. The chain crosses the membrane as a helical span at residues tyrosine 6–alanine 30. The Cytoplasmic segment spans residues threonine 31 to asparagine 42. A helical membrane pass occupies residues tryptophan 43 to methionine 68. Residues tyrosine 69–glutamate 82 are Extracellular-facing. Cysteine 79 and cysteine 156 are disulfide-bonded. A helical transmembrane segment spans residues glycine 83–tryptophan 102. The Cytoplasmic segment spans residues glutamate 103–leucine 121. The helical transmembrane segment at alanine 122–serine 145 threads the bilayer. Over arginine 146–serine 171 the chain is Extracellular. The chain crosses the membrane as a helical span at residues tyrosine 172–isoleucine 199. Residues arginine 200–arginine 221 lie on the Cytoplasmic side of the membrane. The chain crosses the membrane as a helical span at residues methionine 222 to alanine 245. The Extracellular portion of the chain corresponds to alanine 246–histidine 253. The chain crosses the membrane as a helical span at residues proline 254–isoleucine 273. Position 265 is an N6-(retinylidene)lysine (lysine 265).

It belongs to the G-protein coupled receptor 1 family. Opsin subfamily. In terms of assembly, monomer. Homodimer. Homotetramer. Post-translationally, O-glycosylated. Phosphorylated on some or all of the serine and threonine residues present in the C-terminal region. In terms of tissue distribution, the three color pigments are found in the cone photoreceptor cells.

The protein localises to the membrane. Visual pigments are the light-absorbing molecules that mediate vision. They consist of an apoprotein, opsin, covalently linked to cis-retinal. The protein is Medium-wave-sensitive opsin 1 (OPN1MW) of Odocoileus virginianus virginianus (Virginia white-tailed deer).